The sequence spans 298 residues: Lipoyl synthase (298 aa).

Residues cysteine 37, cysteine 42, cysteine 48, cysteine 63, cysteine 67, cysteine 70, and serine 277 each coordinate [4Fe-4S] cluster. Residues 49 to 266 (WGGGTATVML…KTLAESYGFL (218 aa)) enclose the Radical SAM core domain.

This sequence belongs to the radical SAM superfamily. Lipoyl synthase family. The cofactor is [4Fe-4S] cluster.

The protein localises to the cytoplasm. The enzyme catalyses [[Fe-S] cluster scaffold protein carrying a second [4Fe-4S](2+) cluster] + N(6)-octanoyl-L-lysyl-[protein] + 2 oxidized [2Fe-2S]-[ferredoxin] + 2 S-adenosyl-L-methionine + 4 H(+) = [[Fe-S] cluster scaffold protein] + N(6)-[(R)-dihydrolipoyl]-L-lysyl-[protein] + 4 Fe(3+) + 2 hydrogen sulfide + 2 5'-deoxyadenosine + 2 L-methionine + 2 reduced [2Fe-2S]-[ferredoxin]. It functions in the pathway protein modification; protein lipoylation via endogenous pathway; protein N(6)-(lipoyl)lysine from octanoyl-[acyl-carrier-protein]: step 2/2. Catalyzes the radical-mediated insertion of two sulfur atoms into the C-6 and C-8 positions of the octanoyl moiety bound to the lipoyl domains of lipoate-dependent enzymes, thereby converting the octanoylated domains into lipoylated derivatives. This Myxococcus xanthus (strain DK1622) protein is Lipoyl synthase.